The following is a 36-amino-acid chain: Neuropeptide F (36 aa).

Phenylalanine amide is present on F36.

It belongs to the NPY family. As to expression, central and peripheral nervous system, and muscular pharynx.

It is found in the secreted. Its function is as follows. May perform an important neurotransmitter function and may regulate muscular activity. This chain is Neuropeptide F, found in Arthurdendyus triangulatus (New Zealand flatworm).